The following is a 253-amino-acid chain: MEWTDDGIVLGVRRHGESSAIVELLTRGHGRHLGLVRGGAGSRMRPLLQPGNSVSALWRARLDEHLGAYALEGTRMRAANLLGASHATYGVTHLASLARLLPERDPHDGIFERLERTLDDFDTAGEAAIHLIRFELAMLTELGFGLDLSTCVATGTTTELIYVSPKSGGAVSRQAGEPWRDRLLRLPPFLREADEEQSGWSDQDLLDGFELTGRFLLRHVLEPRGQGHSDARAGFINAVVKHQARASAAAISG.

Belongs to the RecO family.

In terms of biological role, involved in DNA repair and RecF pathway recombination. This is DNA repair protein RecO from Nitrobacter hamburgensis (strain DSM 10229 / NCIMB 13809 / X14).